The following is a 398-amino-acid chain: Phosphoglycerate kinase (398 aa).

Residues 21 to 23 (DFN), R36, 59 to 62 (HLGR), R119, and R157 each bind substrate. Residues K208, G296, E327, and 354 to 357 (GGDS) contribute to the ATP site.

It belongs to the phosphoglycerate kinase family. In terms of assembly, monomer.

It is found in the cytoplasm. The catalysed reaction is (2R)-3-phosphoglycerate + ATP = (2R)-3-phospho-glyceroyl phosphate + ADP. It participates in carbohydrate degradation; glycolysis; pyruvate from D-glyceraldehyde 3-phosphate: step 2/5. This is Phosphoglycerate kinase from Streptococcus pyogenes serotype M18 (strain MGAS8232).